The sequence spans 238 residues: Phosphoribosylaminoimidazole-succinocarboxamide synthase (238 aa).

This sequence belongs to the SAICAR synthetase family.

It catalyses the reaction 5-amino-1-(5-phospho-D-ribosyl)imidazole-4-carboxylate + L-aspartate + ATP = (2S)-2-[5-amino-1-(5-phospho-beta-D-ribosyl)imidazole-4-carboxamido]succinate + ADP + phosphate + 2 H(+). Its pathway is purine metabolism; IMP biosynthesis via de novo pathway; 5-amino-1-(5-phospho-D-ribosyl)imidazole-4-carboxamide from 5-amino-1-(5-phospho-D-ribosyl)imidazole-4-carboxylate: step 1/2. This chain is Phosphoribosylaminoimidazole-succinocarboxamide synthase, found in Nitrosococcus oceani (strain ATCC 19707 / BCRC 17464 / JCM 30415 / NCIMB 11848 / C-107).